Reading from the N-terminus, the 369-residue chain is Glutamate 5-kinase (369 aa).

Residue K9 coordinates ATP. Residues S49, D136, and N148 each coordinate substrate. ATP contacts are provided by residues 168–169 (TD) and 210–216 (TGGMLTK). The PUA domain maps to 275-355 (RGSVYVDEGA…KGVFIHRDDW (81 aa)).

This sequence belongs to the glutamate 5-kinase family.

It is found in the cytoplasm. It carries out the reaction L-glutamate + ATP = L-glutamyl 5-phosphate + ADP. It participates in amino-acid biosynthesis; L-proline biosynthesis; L-glutamate 5-semialdehyde from L-glutamate: step 1/2. Its function is as follows. Catalyzes the transfer of a phosphate group to glutamate to form L-glutamate 5-phosphate. In Neisseria meningitidis serogroup B (strain ATCC BAA-335 / MC58), this protein is Glutamate 5-kinase.